We begin with the raw amino-acid sequence, 518 residues long: Lysine--tRNA ligase (518 aa).

The Mg(2+) site is built by E407 and E414.

Belongs to the class-II aminoacyl-tRNA synthetase family. Homodimer. Requires Mg(2+) as cofactor.

It localises to the cytoplasm. It catalyses the reaction tRNA(Lys) + L-lysine + ATP = L-lysyl-tRNA(Lys) + AMP + diphosphate. The protein is Lysine--tRNA ligase of Helicobacter hepaticus (strain ATCC 51449 / 3B1).